A 666-amino-acid chain; its full sequence is Transketolase (666 aa).

His-26 serves as a coordination point for substrate. Thiamine diphosphate contacts are provided by residues His-66 and 114–116 (GPL). Residue Asp-155 coordinates Mg(2+). Thiamine diphosphate contacts are provided by Gly-156 and Asn-185. Positions 185 and 187 each coordinate Mg(2+). Substrate-binding residues include His-261, Arg-358, and Ser-385. His-261 serves as a coordination point for thiamine diphosphate. The Proton donor role is filled by Glu-411. Residue Phe-437 coordinates thiamine diphosphate. Substrate contacts are provided by His-461, Asp-469, and Arg-520.

The protein belongs to the transketolase family. As to quaternary structure, homodimer. Mg(2+) is required as a cofactor. Ca(2+) serves as cofactor. The cofactor is Mn(2+). It depends on Co(2+) as a cofactor. Requires thiamine diphosphate as cofactor.

It catalyses the reaction D-sedoheptulose 7-phosphate + D-glyceraldehyde 3-phosphate = aldehydo-D-ribose 5-phosphate + D-xylulose 5-phosphate. Its function is as follows. Catalyzes the transfer of a two-carbon ketol group from a ketose donor to an aldose acceptor, via a covalent intermediate with the cofactor thiamine pyrophosphate. The polypeptide is Transketolase (tkt) (Buchnera aphidicola subsp. Baizongia pistaciae (strain Bp)).